Here is an 82-residue protein sequence, read N- to C-terminus: ATP synthase subunit c (82 aa).

Transmembrane regions (helical) follow at residues 3 to 23 (PLVA…ASLG) and 57 to 77 (LAFM…LLFA).

The protein belongs to the ATPase C chain family. As to quaternary structure, F-type ATPases have 2 components, F(1) - the catalytic core - and F(0) - the membrane proton channel. F(1) has five subunits: alpha(3), beta(3), gamma(1), delta(1), epsilon(1). F(0) has four main subunits: a(1), b(1), b'(1) and c(10-14). The alpha and beta chains form an alternating ring which encloses part of the gamma chain. F(1) is attached to F(0) by a central stalk formed by the gamma and epsilon chains, while a peripheral stalk is formed by the delta, b and b' chains.

The protein localises to the cellular thylakoid membrane. In terms of biological role, f(1)F(0) ATP synthase produces ATP from ADP in the presence of a proton or sodium gradient. F-type ATPases consist of two structural domains, F(1) containing the extramembraneous catalytic core and F(0) containing the membrane proton channel, linked together by a central stalk and a peripheral stalk. During catalysis, ATP synthesis in the catalytic domain of F(1) is coupled via a rotary mechanism of the central stalk subunits to proton translocation. Functionally, key component of the F(0) channel; it plays a direct role in translocation across the membrane. A homomeric c-ring of between 10-14 subunits forms the central stalk rotor element with the F(1) delta and epsilon subunits. The chain is ATP synthase subunit c from Synechococcus sp. (strain PCC 6716).